The chain runs to 122 residues: Large ribosomal subunit protein uL14c (122 aa).

This sequence belongs to the universal ribosomal protein uL14 family. In terms of assembly, part of the 50S ribosomal subunit.

It localises to the plastid. It is found in the chloroplast. Functionally, binds to 23S rRNA. The polypeptide is Large ribosomal subunit protein uL14c (Panax ginseng (Korean ginseng)).